The chain runs to 115 residues: Non-specific lipid-transfer protein Cw18 (115 aa).

A signal peptide spans 1-25 (MARTAATKLALVALVAAMLLVAADA). 4 cysteine pairs are disulfide-bonded: C29–C77, C39–C54, C55–C97, and C75–C111.

This sequence belongs to the plant LTP family. Highly expressed in leaves and coleoptiles. No expression in roots.

Plant non-specific lipid-transfer proteins transfer phospholipids as well as galactolipids across membranes. May play a role in wax or cutin deposition in the cell walls of expanding epidermal cells and certain secretory tissues. The sequence is that of Non-specific lipid-transfer protein Cw18 (CW18) from Hordeum vulgare (Barley).